We begin with the raw amino-acid sequence, 1603 residues long: Vitellogenin-3 (1603 aa).

The signal sequence occupies residues 1–15 (MKSIIIASLVALAIA). Residues 24–685 (FSPKSEYVYK…EKNAFLPKEV (662 aa)) enclose the Vitellogenin domain. N-linked (GlcNAc...) asparagine glycosylation is present at Asn1266. Positions 1306-1475 (ATCKVGQSEV…SYLLKNEECE (170 aa)) constitute a VWFD domain. 2 disulfides stabilise this stretch: Cys1308-Cys1438 and Cys1330-Cys1474.

In terms of tissue distribution, expressed in the intestine of adult hermaphrodites.

It localises to the secreted. Precursor of the egg-yolk proteins that are sources of nutrients during embryonic development. Together with other vitellogenins, may play a role in modulating life-span, acting via induction of autophagy and lysosomal lipolysis. The sequence is that of Vitellogenin-3 (vit-3) from Caenorhabditis elegans.